The primary structure comprises 713 residues: Oligopeptidase PhomG (713 aa).

Residue histidine 461 participates in Zn(2+) binding. Glutamate 462 is an active-site residue. Zn(2+) is bound by residues histidine 465 and histidine 468.

It belongs to the peptidase M3 family. Monomer. It depends on Zn(2+) as a cofactor.

It functions in the pathway mycotoxin biosynthesis. Its function is as follows. Oligopeptidase; part of the gene cluster that mediates the biosynthesis of the phomopsins, a group of hexapeptide mycotoxins which infects lupins and causes lupinosis disease in livestock. Within the pathway, phomG and phomG' are probably involved in the processing of the phomA and phomA' precursors. The pathway starts with the processing of the precursor phomA by several endopeptidases including kexin proteases as well as the cluster-specific S41 family peptidase phomP1 and the oligopeptidase phomG to produce 10 identical copies of the hexapeptide Tyr-Val-Ile-Pro-Ile-Asp. After being excised from the precursor peptide, the core peptides are cyclized and modified post-translationally by enzymes encoded within the gene cluster. The timing and order of proteolysis of the phomA precursor and PTMs are still unknown. Two tyrosinase-like enzymes, phomQ1 and phomQ2, catalyze the chlorination and hydroxylation of Tyr, respectively. PhomYb, is proposed to be involved in the construction of the macrocyclic structure. The other 4 ustYa family proteins may be involved in PTMs that generate the unique structure of phomopsin A. PhomYa is required for the hydroxylation of C-beta of Tyr. PhomYc, phomYd, and phomYe are responsible for the biosynthesis of 2,3-dehydroisoleucine (dIle), 2,3-dehydroaspartic acid (dAsp), and 3,4-dehydroproline (dPro), respectively. While dIle formation by phomYc is indispensable for the installation of dAsp by phomYd, the order of the other PTMs have not been elucidated yet. Most of the biosynthetic enzymes likely have broad substrate specificity, and thus, there might be a metabolic grid from a precursor to phomopsin A. The enzyme(s) responsible for the biosynthesis of 3,4-dehydrovaline (dVal) have also not been identified yet. Finally, phomM acts as an S-adenosylmethionine-dependent alpha-N-methyltransferase that catalyzes two successive N-methylation reactions, converting N-desmethyl-phomopsin A to phomopsin A and phomopsin A further to an N,N-dimethylated congener called phomopsin E. This is Oligopeptidase PhomG from Diaporthe leptostromiformis (Lupinosis disease fungus).